Here is a 281-residue protein sequence, read N- to C-terminus: 2-dehydro-3-deoxyphosphooctonate aldolase (281 aa).

It belongs to the KdsA family.

It is found in the cytoplasm. The catalysed reaction is D-arabinose 5-phosphate + phosphoenolpyruvate + H2O = 3-deoxy-alpha-D-manno-2-octulosonate-8-phosphate + phosphate. The protein operates within carbohydrate biosynthesis; 3-deoxy-D-manno-octulosonate biosynthesis; 3-deoxy-D-manno-octulosonate from D-ribulose 5-phosphate: step 2/3. Its pathway is bacterial outer membrane biogenesis; lipopolysaccharide biosynthesis. This Pseudomonas putida (strain GB-1) protein is 2-dehydro-3-deoxyphosphooctonate aldolase.